Here is a 298-residue protein sequence, read N- to C-terminus: Tyrosine recombinase XerD (298 aa).

In terms of domain architecture, Core-binding (CB) spans 2–87; the sequence is KQELARIEQF…AVRRLFQYLY (86 aa). In terms of domain architecture, Tyr recombinase spans 108-292; it reads RLPKDLSEAQ…ATERLRQLHQ (185 aa). Active-site residues include R148, K172, H244, R247, and H270. Y279 acts as the O-(3'-phospho-DNA)-tyrosine intermediate in catalysis.

This sequence belongs to the 'phage' integrase family. XerD subfamily. As to quaternary structure, forms a cyclic heterotetrameric complex composed of two molecules of XerC and two molecules of XerD, in which XerC interacts with XerD via its C-terminal region, XerD interacts with XerC via its C-terminal region and so on.

Its subcellular location is the cytoplasm. With respect to regulation, ftsK may regulate the catalytic switch between XerC and XerD in the heterotetrameric complex during the two steps of the recombination process. Functionally, site-specific tyrosine recombinase, which acts by catalyzing the cutting and rejoining of the recombining DNA molecules. Binds cooperatively to specific DNA consensus sequences that are separated from XerC binding sites by a short central region, forming the heterotetrameric XerC-XerD complex that recombines DNA substrates. The complex is essential to convert dimers of the bacterial chromosome into monomers to permit their segregation at cell division. It also contributes to the segregational stability of plasmids. In the complex XerD specifically exchanges the bottom DNA strands. The protein is Tyrosine recombinase XerD of Shigella flexneri.